Reading from the N-terminus, the 386-residue chain is Acetate kinase (386 aa).

Residue Asn9 participates in Mg(2+) binding. Position 16 (Lys16) interacts with ATP. Position 74 (Arg74) interacts with substrate. The active-site Proton donor/acceptor is Asp131. Residues His191–Gly195, Asp265–Arg267, and Gly313–Asn317 each bind ATP. A Mg(2+)-binding site is contributed by Glu367.

This sequence belongs to the acetokinase family. Homodimer. The cofactor is Mg(2+). Mn(2+) serves as cofactor.

Its subcellular location is the cytoplasm. The enzyme catalyses acetate + ATP = acetyl phosphate + ADP. It functions in the pathway metabolic intermediate biosynthesis; acetyl-CoA biosynthesis; acetyl-CoA from acetate: step 1/2. In terms of biological role, catalyzes the formation of acetyl phosphate from acetate and ATP. Can also catalyze the reverse reaction. In Mycolicibacterium gilvum (strain PYR-GCK) (Mycobacterium gilvum (strain PYR-GCK)), this protein is Acetate kinase.